The sequence spans 261 residues: NAD kinase (261 aa).

Aspartate 54 (proton acceptor) is an active-site residue. NAD(+)-binding positions include aspartate 54 to glycine 55, asparagine 123 to aspartate 124, arginine 150, aspartate 152, and threonine 163 to serine 168.

Belongs to the NAD kinase family. It depends on a divalent metal cation as a cofactor.

The protein resides in the cytoplasm. The enzyme catalyses NAD(+) + ATP = ADP + NADP(+) + H(+). In terms of biological role, involved in the regulation of the intracellular balance of NAD and NADP, and is a key enzyme in the biosynthesis of NADP. Catalyzes specifically the phosphorylation on 2'-hydroxyl of the adenosine moiety of NAD to yield NADP. The protein is NAD kinase of Caldicellulosiruptor bescii (strain ATCC BAA-1888 / DSM 6725 / KCTC 15123 / Z-1320) (Anaerocellum thermophilum).